The following is an 87-amino-acid chain: Retinal rod rhodopsin-sensitive cGMP 3',5'-cyclic phosphodiesterase subunit gamma (87 aa).

Met1 bears the N-acetylmethionine mark. A compositionally biased stretch (basic and acidic residues) spans 1-12; sequence MNLEPPKAEIRS. A disordered region spans residues 1–55; sequence MNLEPPKAEIRSATRVMGGPVTPRKGPPKFKQRQTRQFKSKPPKKGVQGFGDDIP. Positions 26–44 are enriched in basic residues; it reads GPPKFKQRQTRQFKSKPPK.

This sequence belongs to the rod/cone cGMP-PDE gamma subunit family. In terms of assembly, oligomer composed of two catalytic chains (alpha and beta), an inhibitory chain (gamma) and the delta chain.

The enzyme catalyses 3',5'-cyclic GMP + H2O = GMP + H(+). Its function is as follows. Participates in processes of transmission and amplification of the visual signal. cGMP-PDEs are the effector molecules in G-protein-mediated phototransduction in vertebrate rods and cones. The protein is Retinal rod rhodopsin-sensitive cGMP 3',5'-cyclic phosphodiesterase subunit gamma (PDE6G) of Bos taurus (Bovine).